Here is a 215-residue protein sequence, read N- to C-terminus: Pyrrolidone-carboxylate peptidase (215 aa).

Active-site residues include E78, C141, and H165.

This sequence belongs to the peptidase C15 family. As to quaternary structure, homotetramer.

The protein localises to the cytoplasm. It catalyses the reaction Release of an N-terminal pyroglutamyl group from a polypeptide, the second amino acid generally not being Pro.. Removes 5-oxoproline from various penultimate amino acid residues except L-proline. The sequence is that of Pyrrolidone-carboxylate peptidase from Streptococcus suis (strain 98HAH33).